Consider the following 715-residue polypeptide: DNA ligase (715 aa).

NAD(+) is bound by residues 47–51, 96–97, and E129; these read DADYD and SL. K131 serves as the catalytic N6-AMP-lysine intermediate. The NAD(+) site is built by R152, E189, K306, and K330. C435, C438, C453, and C459 together coordinate Zn(2+). The 79-residue stretch at 637–715 folds into the BRCT domain; sequence KRDSAVAGKT…EDEWLALIQG (79 aa).

The protein belongs to the NAD-dependent DNA ligase family. LigA subfamily. It depends on Mg(2+) as a cofactor. Mn(2+) serves as cofactor.

It carries out the reaction NAD(+) + (deoxyribonucleotide)n-3'-hydroxyl + 5'-phospho-(deoxyribonucleotide)m = (deoxyribonucleotide)n+m + AMP + beta-nicotinamide D-nucleotide.. Functionally, DNA ligase that catalyzes the formation of phosphodiester linkages between 5'-phosphoryl and 3'-hydroxyl groups in double-stranded DNA using NAD as a coenzyme and as the energy source for the reaction. It is essential for DNA replication and repair of damaged DNA. The protein is DNA ligase of Rhodopseudomonas palustris (strain BisA53).